The primary structure comprises 160 residues: Putative pre-16S rRNA nuclease (160 aa).

It belongs to the YqgF nuclease family.

The protein resides in the cytoplasm. Its function is as follows. Could be a nuclease involved in processing of the 5'-end of pre-16S rRNA. This is Putative pre-16S rRNA nuclease from Gluconobacter oxydans (strain 621H) (Gluconobacter suboxydans).